A 171-amino-acid chain; its full sequence is Large ribosomal subunit protein bL9 (171 aa).

The protein belongs to the bacterial ribosomal protein bL9 family.

In terms of biological role, binds to the 23S rRNA. The sequence is that of Large ribosomal subunit protein bL9 from Rickettsia conorii (strain ATCC VR-613 / Malish 7).